The following is a 716-amino-acid chain: 1,4-alpha-glucan branching enzyme GlgB (716 aa).

Aspartate 399 functions as the Nucleophile in the catalytic mechanism. The active-site Proton donor is glutamate 452.

The protein belongs to the glycosyl hydrolase 13 family. GlgB subfamily. In terms of assembly, monomer.

It catalyses the reaction Transfers a segment of a (1-&gt;4)-alpha-D-glucan chain to a primary hydroxy group in a similar glucan chain.. It functions in the pathway glycan biosynthesis; glycogen biosynthesis. In terms of biological role, catalyzes the formation of the alpha-1,6-glucosidic linkages in glycogen by scission of a 1,4-alpha-linked oligosaccharide from growing alpha-1,4-glucan chains and the subsequent attachment of the oligosaccharide to the alpha-1,6 position. This Rhodopseudomonas palustris (strain BisB5) protein is 1,4-alpha-glucan branching enzyme GlgB.